We begin with the raw amino-acid sequence, 103 residues long: Large ribosomal subunit protein bL21 (103 aa).

Belongs to the bacterial ribosomal protein bL21 family. In terms of assembly, part of the 50S ribosomal subunit. Contacts protein L20.

In terms of biological role, this protein binds to 23S rRNA in the presence of protein L20. This is Large ribosomal subunit protein bL21 from Borreliella burgdorferi (strain ZS7) (Borrelia burgdorferi).